Reading from the N-terminus, the 117-residue chain is Mediator of RNA polymerase II transcription subunit 11 (117 aa).

An N-acetylalanine modification is found at alanine 2.

The protein belongs to the Mediator complex subunit 11 family. In terms of assembly, component of the Mediator complex, which is composed of MED1, MED4, MED6, MED7, MED8, MED9, MED10, MED11, MED12, MED13, MED13L, MED14, MED15, MED16, MED17, MED18, MED19, MED20, MED21, MED22, MED23, MED24, MED25, MED26, MED27, MED29, MED30, MED31, CCNC, CDK8 and CDC2L6/CDK11. The MED12, MED13, CCNC and CDK8 subunits form a distinct module termed the CDK8 module. Mediator containing the CDK8 module is less active than Mediator lacking this module in supporting transcriptional activation. Individual preparations of the Mediator complex lacking one or more distinct subunits have been variously termed ARC, CRSP, DRIP, PC2, SMCC and TRAP. As to expression, expressed in cochlea.

Its subcellular location is the nucleus. Component of the Mediator complex, a coactivator involved in the regulated transcription of nearly all RNA polymerase II-dependent genes. Mediator functions as a bridge to convey information from gene-specific regulatory proteins to the basal RNA polymerase II transcription machinery. Mediator is recruited to promoters by direct interactions with regulatory proteins and serves as a scaffold for the assembly of a functional pre-initiation complex with RNA polymerase II and the general transcription factors. The protein is Mediator of RNA polymerase II transcription subunit 11 (Med11) of Mus musculus (Mouse).